Reading from the N-terminus, the 200-residue chain is 3-isopropylmalate dehydratase small subunit (200 aa).

This sequence belongs to the LeuD family. LeuD type 1 subfamily. In terms of assembly, heterodimer of LeuC and LeuD.

It catalyses the reaction (2R,3S)-3-isopropylmalate = (2S)-2-isopropylmalate. Its pathway is amino-acid biosynthesis; L-leucine biosynthesis; L-leucine from 3-methyl-2-oxobutanoate: step 2/4. Catalyzes the isomerization between 2-isopropylmalate and 3-isopropylmalate, via the formation of 2-isopropylmaleate. This Yersinia pestis bv. Antiqua (strain Antiqua) protein is 3-isopropylmalate dehydratase small subunit.